The sequence spans 158 residues: Endoribonuclease YbeY (158 aa).

Zn(2+)-binding residues include histidine 124, histidine 128, and histidine 134.

This sequence belongs to the endoribonuclease YbeY family. Zn(2+) serves as cofactor.

It is found in the cytoplasm. In terms of biological role, single strand-specific metallo-endoribonuclease involved in late-stage 70S ribosome quality control and in maturation of the 3' terminus of the 16S rRNA. In Latilactobacillus sakei subsp. sakei (strain 23K) (Lactobacillus sakei subsp. sakei), this protein is Endoribonuclease YbeY.